Consider the following 372-residue polypeptide: Chaperone protein DnaJ (372 aa).

Residues D5–G69 form the J domain. A CR-type zinc finger spans residues G129 to T211. Zn(2+) contacts are provided by C142, C145, C159, C162, C185, C188, C199, and C202. CXXCXGXG motif repeat units follow at residues C142 to G149, C159 to G166, C185 to G192, and C199 to G206.

This sequence belongs to the DnaJ family. As to quaternary structure, homodimer. Zn(2+) serves as cofactor.

The protein localises to the cytoplasm. Participates actively in the response to hyperosmotic and heat shock by preventing the aggregation of stress-denatured proteins and by disaggregating proteins, also in an autonomous, DnaK-independent fashion. Unfolded proteins bind initially to DnaJ; upon interaction with the DnaJ-bound protein, DnaK hydrolyzes its bound ATP, resulting in the formation of a stable complex. GrpE releases ADP from DnaK; ATP binding to DnaK triggers the release of the substrate protein, thus completing the reaction cycle. Several rounds of ATP-dependent interactions between DnaJ, DnaK and GrpE are required for fully efficient folding. Also involved, together with DnaK and GrpE, in the DNA replication of plasmids through activation of initiation proteins. The protein is Chaperone protein DnaJ of Macrococcus caseolyticus (strain JCSC5402) (Macrococcoides caseolyticum).